Reading from the N-terminus, the 89-residue chain is Small ribosomal subunit protein uS15 (89 aa).

It belongs to the universal ribosomal protein uS15 family. As to quaternary structure, part of the 30S ribosomal subunit. Forms a bridge to the 50S subunit in the 70S ribosome, contacting the 23S rRNA.

Its function is as follows. One of the primary rRNA binding proteins, it binds directly to 16S rRNA where it helps nucleate assembly of the platform of the 30S subunit by binding and bridging several RNA helices of the 16S rRNA. Functionally, forms an intersubunit bridge (bridge B4) with the 23S rRNA of the 50S subunit in the ribosome. This Shewanella baltica (strain OS223) protein is Small ribosomal subunit protein uS15.